The following is a 369-amino-acid chain: Ferrochelatase (369 aa).

Residues His210 and Glu291 each coordinate Fe cation.

It belongs to the ferrochelatase family.

The protein resides in the cytoplasm. It catalyses the reaction heme b + 2 H(+) = protoporphyrin IX + Fe(2+). It functions in the pathway porphyrin-containing compound metabolism; protoheme biosynthesis; protoheme from protoporphyrin-IX: step 1/1. In terms of biological role, catalyzes the ferrous insertion into protoporphyrin IX. The sequence is that of Ferrochelatase from Thioalkalivibrio sulfidiphilus (strain HL-EbGR7).